A 340-amino-acid chain; its full sequence is Eukaryotic translation initiation factor 3 subunit I (340 aa).

WD repeat units follow at residues 8 to 47 (GHER…RLGT), 50 to 89 (GHQG…CVKV), 91 to 135 (DFPT…GEGN), 150 to 189 (CEQS…QLQN), 194 to 233 (EFDY…VMKT), and 291 to 330 (GHFG…FDFM).

Belongs to the eIF-3 subunit I family. Component of the eukaryotic translation initiation factor 3 (eIF-3) complex.

It is found in the cytoplasm. Component of the eukaryotic translation initiation factor 3 (eIF-3) complex, which is involved in protein synthesis of a specialized repertoire of mRNAs and, together with other initiation factors, stimulates binding of mRNA and methionyl-tRNAi to the 40S ribosome. The eIF-3 complex specifically targets and initiates translation of a subset of mRNAs involved in cell proliferation. The chain is Eukaryotic translation initiation factor 3 subunit I from Coccidioides immitis (strain RS) (Valley fever fungus).